The chain runs to 324 residues: RING-H2 finger protein ATL3 (324 aa).

The chain crosses the membrane as a helical span at residues 24–44; the sequence is IILTAIIVLFMAVLFVLILHL. An RING-type; atypical zinc finger spans residues 127 to 169; that stretch reads CSICLSELVKGDKARLLPKCNHSFHVECIDMWFQSHSTCPICR. Disordered stretches follow at residues 179-210, 226-248, and 299-324; these read SSKR…STSS, VSTG…ASQS, and RDKR…SVDP. Composition is skewed to polar residues over residues 192-210 and 226-235; these read NAGT…STSS and VSTGNTNVGT. The span at 306 to 324 shows a compositional bias: low complexity; it reads SNSSTSNSSSSNAVASVDP.

This sequence belongs to the RING-type zinc finger family. ATL subfamily.

The protein localises to the membrane. The catalysed reaction is S-ubiquitinyl-[E2 ubiquitin-conjugating enzyme]-L-cysteine + [acceptor protein]-L-lysine = [E2 ubiquitin-conjugating enzyme]-L-cysteine + N(6)-ubiquitinyl-[acceptor protein]-L-lysine.. It functions in the pathway protein modification; protein ubiquitination. The polypeptide is RING-H2 finger protein ATL3 (ATL3) (Arabidopsis thaliana (Mouse-ear cress)).